Reading from the N-terminus, the 484-residue chain is Antibiotic efflux pump outer membrane protein ArpC (484 aa).

The N-terminal stretch at 1–17 (MTKSLLSLAVTAFILGG) is a signal peptide. Cys18 carries the N-palmitoyl cysteine lipid modification. A lipid anchor (S-diacylglycerol cysteine) is attached at Cys18.

This sequence belongs to the outer membrane factor (OMF) (TC 1.B.17) family.

Its subcellular location is the cell outer membrane. Functionally, the outer membrane component of an antibiotic efflux pump. Confers resistance to numerous structurally unrelated antibiotics such as carbenicillin, chloramphenicol, erythromycin, novobiocin, streptomycin and tetracycline. Is not involved in organic solvent efflux. In Pseudomonas putida (Arthrobacter siderocapsulatus), this protein is Antibiotic efflux pump outer membrane protein ArpC (arpC).